The primary structure comprises 193 residues: MSSHLARLEALLFVAGEDGLSLRTMAQLLEIPVTGLTQSLEKLQAKYKADEDTALCLLESSNTYKIVTKPDFACLLRDYSKTPINQSLSRASLEVLSIVAYKQPITRAEVDDIRGVNSSGAIAKLQAFGLIREAGKKDAVGRPNLYATTDYFLDYIGINSLDELVAIDQLELEEQETSLFREDAPEDLEDLDN.

The protein belongs to the ScpB family. Homodimer. Homodimerization may be required to stabilize the binding of ScpA to the Smc head domains. Component of a cohesin-like complex composed of ScpA, ScpB and the Smc homodimer, in which ScpA and ScpB bind to the head domain of Smc. The presence of the three proteins is required for the association of the complex with DNA.

The protein resides in the cytoplasm. Its function is as follows. Participates in chromosomal partition during cell division. May act via the formation of a condensin-like complex containing Smc and ScpA that pull DNA away from mid-cell into both cell halves. The chain is Segregation and condensation protein B from Streptococcus thermophilus (strain CNRZ 1066).